Consider the following 390-residue polypeptide: Cell division protein FtsZ (390 aa).

GTP-binding positions include 20 to 24, 106 to 108, Glu-137, Arg-141, and Asp-184; these read GGGNN and GTG.

This sequence belongs to the FtsZ family. In terms of assembly, homodimer. Polymerizes to form a dynamic ring structure in a strictly GTP-dependent manner. Interacts directly with several other division proteins.

The protein resides in the cytoplasm. Essential cell division protein that forms a contractile ring structure (Z ring) at the future cell division site. The regulation of the ring assembly controls the timing and the location of cell division. One of the functions of the FtsZ ring is to recruit other cell division proteins to the septum to produce a new cell wall between the dividing cells. Binds GTP and shows GTPase activity. The chain is Cell division protein FtsZ from Mycoplasmopsis pulmonis (strain UAB CTIP) (Mycoplasma pulmonis).